The primary structure comprises 375 residues: Ribosomal RNA large subunit methyltransferase G (375 aa).

The protein belongs to the methyltransferase superfamily. RlmG family.

The protein localises to the cytoplasm. The catalysed reaction is guanosine(1835) in 23S rRNA + S-adenosyl-L-methionine = N(2)-methylguanosine(1835) in 23S rRNA + S-adenosyl-L-homocysteine + H(+). In terms of biological role, specifically methylates the guanine in position 1835 (m2G1835) of 23S rRNA. The chain is Ribosomal RNA large subunit methyltransferase G from Stutzerimonas stutzeri (strain A1501) (Pseudomonas stutzeri).